The following is a 265-amino-acid chain: Phosphate import ATP-binding protein PstB (265 aa).

The ABC transporter domain occupies 18–260 (ISARDVQVFY…PEDPRTESYI (243 aa)). Residue 50-57 (GPSGCGKS) participates in ATP binding.

It belongs to the ABC transporter superfamily. Phosphate importer (TC 3.A.1.7) family. In terms of assembly, the complex is composed of two ATP-binding proteins (PstB), two transmembrane proteins (PstC and PstA) and a solute-binding protein (PstS).

It is found in the cell inner membrane. The catalysed reaction is phosphate(out) + ATP + H2O = ADP + 2 phosphate(in) + H(+). Its function is as follows. Part of the ABC transporter complex PstSACB involved in phosphate import. Responsible for energy coupling to the transport system. This is Phosphate import ATP-binding protein PstB from Roseobacter denitrificans (strain ATCC 33942 / OCh 114) (Erythrobacter sp. (strain OCh 114)).